A 453-amino-acid polypeptide reads, in one-letter code: Prenyltransferase nscD (453 aa).

Dimethylallyl diphosphate is bound by residues R118, K200, Y202, K271, Y273, and Y428.

Belongs to the tryptophan dimethylallyltransferase family.

The protein operates within secondary metabolite biosynthesis. Its function is as follows. Prenyltransferase; part of the gene cluster that mediates the biosynthesis of neosartoricin, a prenylated anthracenone that exhibits T-cell antiproliferative activity, suggestive of a physiological role as an immunosuppressive agent. The non-reducing polyketide synthase nscA probably synthesizes and cyclizes the decaketide backbone. The hydrolase nscB then mediates the product release through hydrolysis followed by spontaneous decarboxylation. The prenyltransferase nscD catalyzes the addition of the dimethylallyl group to the aromatic C5. The FAD-dependent monooxygenase nscC is then responsible for the stereospecific hydroxylation at C2. There is no gene encoding O-acetyltransferase in the nsc gene cluster; thus, the last step of 2-O-acetylation leading to neosartoricin may be catalyzed by an unidentified O-acetyltransferase. The sequence is that of Prenyltransferase nscD from Aspergillus fumigatus (strain ATCC MYA-4609 / CBS 101355 / FGSC A1100 / Af293) (Neosartorya fumigata).